The following is a 351-amino-acid chain: MTTPPPPSTTPLTYRDAGVDIDAGNALVERIKPLVKRTFRPEVMSGLGGFGALFNLAGKYKEPVLVSGTDGVGTKLKLAQQLNRHNTIGIDLVAMCVNDVLVQGAEPLFFLDYFATGKLDIDTATAVISGIALGCEQSGCALIGGETAEMPDMYPPGEYDLAGFCVAAVEKSQLLDGSQVREDDVLIGIASSGPHSNGYSLIRRIYERAGSPADLDIHGTRLIDTLMAPTALYVKPILKLLHTHSDAIHAMAHITGGGLTENIIRVIPPNLGLRIDANAWTQPPVFQWLQREGALADTEMWRTFNCGIGFVLVATPNQVAPLGQALDNQGLAHWQIGRVVTPVDNERVHIG.

It belongs to the AIR synthase family.

Its subcellular location is the cytoplasm. The enzyme catalyses 2-formamido-N(1)-(5-O-phospho-beta-D-ribosyl)acetamidine + ATP = 5-amino-1-(5-phospho-beta-D-ribosyl)imidazole + ADP + phosphate + H(+). Its pathway is purine metabolism; IMP biosynthesis via de novo pathway; 5-amino-1-(5-phospho-D-ribosyl)imidazole from N(2)-formyl-N(1)-(5-phospho-D-ribosyl)glycinamide: step 2/2. In Xylella fastidiosa (strain Temecula1 / ATCC 700964), this protein is Phosphoribosylformylglycinamidine cyclo-ligase.